A 949-amino-acid chain; its full sequence is Bifunctional uridylyltransferase/uridylyl-removing enzyme (949 aa).

Positions 1–377 (MARHETSFPE…RFRNRVRKIA (377 aa)) are uridylyltransferase. The segment at 378–733 (GTLDFVDDGG…VRTHDFHAIT (356 aa)) is uridylyl-removing. An HD domain is found at 494–610 (VDEHLLRSVD…VDFAERVQSL (117 aa)). ACT domains lie at 734 to 816 (EITV…VIAS) and 845 to 926 (VIEV…ERMP). The segment at 926–949 (PSGIIAPTPVSRVPHGSKTTKAET) is disordered.

It belongs to the GlnD family. It depends on Mg(2+) as a cofactor.

The catalysed reaction is [protein-PII]-L-tyrosine + UTP = [protein-PII]-uridylyl-L-tyrosine + diphosphate. It catalyses the reaction [protein-PII]-uridylyl-L-tyrosine + H2O = [protein-PII]-L-tyrosine + UMP + H(+). Its activity is regulated as follows. Uridylyltransferase (UTase) activity is inhibited by glutamine, while glutamine activates uridylyl-removing (UR) activity. Modifies, by uridylylation and deuridylylation, the PII regulatory proteins (GlnB and homologs), in response to the nitrogen status of the cell that GlnD senses through the glutamine level. Under low glutamine levels, catalyzes the conversion of the PII proteins and UTP to PII-UMP and PPi, while under higher glutamine levels, GlnD hydrolyzes PII-UMP to PII and UMP (deuridylylation). Thus, controls uridylylation state and activity of the PII proteins, and plays an important role in the regulation of nitrogen fixation and metabolism. This is Bifunctional uridylyltransferase/uridylyl-removing enzyme from Rhizobium meliloti (strain 1021) (Ensifer meliloti).